Consider the following 170-residue polypeptide: NADH-quinone oxidoreductase subunit B (170 aa).

Cysteine 37, cysteine 38, cysteine 102, and cysteine 131 together coordinate [4Fe-4S] cluster.

Belongs to the complex I 20 kDa subunit family. In terms of assembly, NDH-1 is composed of 14 different subunits. Subunits NuoB, C, D, E, F, and G constitute the peripheral sector of the complex. The cofactor is [4Fe-4S] cluster.

The protein resides in the cell inner membrane. It carries out the reaction a quinone + NADH + 5 H(+)(in) = a quinol + NAD(+) + 4 H(+)(out). Functionally, NDH-1 shuttles electrons from NADH, via FMN and iron-sulfur (Fe-S) centers, to quinones in the respiratory chain. The immediate electron acceptor for the enzyme in this species is believed to be ubiquinone. Couples the redox reaction to proton translocation (for every two electrons transferred, four hydrogen ions are translocated across the cytoplasmic membrane), and thus conserves the redox energy in a proton gradient. In Geobacter sp. (strain M21), this protein is NADH-quinone oxidoreductase subunit B.